The following is a 224-amino-acid chain: Phosphoribosylformylglycinamidine synthase subunit PurQ (224 aa).

The Glutamine amidotransferase type-1 domain occupies 4 to 224 (RIGIITFPGT…YSVLDGVLAG (221 aa)). The active-site Nucleophile is the Cys-87. Catalysis depends on residues His-195 and Glu-197.

In terms of assembly, part of the FGAM synthase complex composed of 1 PurL, 1 PurQ and 2 PurS subunits.

It is found in the cytoplasm. It catalyses the reaction N(2)-formyl-N(1)-(5-phospho-beta-D-ribosyl)glycinamide + L-glutamine + ATP + H2O = 2-formamido-N(1)-(5-O-phospho-beta-D-ribosyl)acetamidine + L-glutamate + ADP + phosphate + H(+). The catalysed reaction is L-glutamine + H2O = L-glutamate + NH4(+). Its pathway is purine metabolism; IMP biosynthesis via de novo pathway; 5-amino-1-(5-phospho-D-ribosyl)imidazole from N(2)-formyl-N(1)-(5-phospho-D-ribosyl)glycinamide: step 1/2. Its function is as follows. Part of the phosphoribosylformylglycinamidine synthase complex involved in the purines biosynthetic pathway. Catalyzes the ATP-dependent conversion of formylglycinamide ribonucleotide (FGAR) and glutamine to yield formylglycinamidine ribonucleotide (FGAM) and glutamate. The FGAM synthase complex is composed of three subunits. PurQ produces an ammonia molecule by converting glutamine to glutamate. PurL transfers the ammonia molecule to FGAR to form FGAM in an ATP-dependent manner. PurS interacts with PurQ and PurL and is thought to assist in the transfer of the ammonia molecule from PurQ to PurL. This chain is Phosphoribosylformylglycinamidine synthase subunit PurQ, found in Mycolicibacterium paratuberculosis (strain ATCC BAA-968 / K-10) (Mycobacterium paratuberculosis).